The chain runs to 228 residues: Ribose-5-phosphate isomerase A (228 aa).

Residues 31-34 (TGST), 85-88 (DGAD), and 97-100 (KGGG) contribute to the substrate site. Catalysis depends on glutamate 106, which acts as the Proton acceptor. Lysine 124 contributes to the substrate binding site.

Belongs to the ribose 5-phosphate isomerase family. In terms of assembly, homodimer.

The enzyme catalyses aldehydo-D-ribose 5-phosphate = D-ribulose 5-phosphate. Its pathway is carbohydrate degradation; pentose phosphate pathway; D-ribose 5-phosphate from D-ribulose 5-phosphate (non-oxidative stage): step 1/1. Catalyzes the reversible conversion of ribose-5-phosphate to ribulose 5-phosphate. This Haloarcula marismortui (strain ATCC 43049 / DSM 3752 / JCM 8966 / VKM B-1809) (Halobacterium marismortui) protein is Ribose-5-phosphate isomerase A.